A 246-amino-acid polypeptide reads, in one-letter code: Putative S-adenosyl-L-methionine-dependent methyltransferase Mflv_0168 (246 aa).

S-adenosyl-L-methionine is bound by residues Asp-112 and 141-142 (DL).

It belongs to the UPF0677 family.

Its function is as follows. Exhibits S-adenosyl-L-methionine-dependent methyltransferase activity. The chain is Putative S-adenosyl-L-methionine-dependent methyltransferase Mflv_0168 from Mycolicibacterium gilvum (strain PYR-GCK) (Mycobacterium gilvum (strain PYR-GCK)).